A 298-amino-acid polypeptide reads, in one-letter code: UDP-N-acetylenolpyruvoylglucosamine reductase (298 aa).

The 165-residue stretch at 26 to 190 (RAGGPAERLY…VAAVLDLEPG (165 aa)) folds into the FAD-binding PCMH-type domain. The active site involves R170. The active-site Proton donor is S219. E289 is a catalytic residue.

This sequence belongs to the MurB family. FAD is required as a cofactor.

The protein localises to the cytoplasm. It catalyses the reaction UDP-N-acetyl-alpha-D-muramate + NADP(+) = UDP-N-acetyl-3-O-(1-carboxyvinyl)-alpha-D-glucosamine + NADPH + H(+). The protein operates within cell wall biogenesis; peptidoglycan biosynthesis. Cell wall formation. The chain is UDP-N-acetylenolpyruvoylglucosamine reductase from Alkalilimnicola ehrlichii (strain ATCC BAA-1101 / DSM 17681 / MLHE-1).